We begin with the raw amino-acid sequence, 183 residues long: Holliday junction branch migration complex subunit RuvA (183 aa).

The tract at residues 1 to 63 (MIVGLIGVVE…EDAHLLYGFL (63 aa)) is domain I. The domain II stretch occupies residues 64 to 139 (EESEKILFER…FFIQDENRPA (76 aa)). Residue alanine 139 is a region of interest, flexible linker. The segment at 139 to 183 (ARNEVFLALESLGFKSAEINPVLKTLKPHLSIEAAIKEALQQLRS) is domain III.

The protein belongs to the RuvA family. As to quaternary structure, homotetramer. Forms an RuvA(8)-RuvB(12)-Holliday junction (HJ) complex. HJ DNA is sandwiched between 2 RuvA tetramers; dsDNA enters through RuvA and exits via RuvB. An RuvB hexamer assembles on each DNA strand where it exits the tetramer. Each RuvB hexamer is contacted by two RuvA subunits (via domain III) on 2 adjacent RuvB subunits; this complex drives branch migration. In the full resolvosome a probable DNA-RuvA(4)-RuvB(12)-RuvC(2) complex forms which resolves the HJ.

Its subcellular location is the cytoplasm. Its function is as follows. The RuvA-RuvB-RuvC complex processes Holliday junction (HJ) DNA during genetic recombination and DNA repair, while the RuvA-RuvB complex plays an important role in the rescue of blocked DNA replication forks via replication fork reversal (RFR). RuvA specifically binds to HJ cruciform DNA, conferring on it an open structure. The RuvB hexamer acts as an ATP-dependent pump, pulling dsDNA into and through the RuvAB complex. HJ branch migration allows RuvC to scan DNA until it finds its consensus sequence, where it cleaves and resolves the cruciform DNA. The protein is Holliday junction branch migration complex subunit RuvA of Helicobacter pylori (strain J99 / ATCC 700824) (Campylobacter pylori J99).